The primary structure comprises 192 residues: Urease accessory protein UreE (192 aa).

The interval 170-192 is disordered; sequence EHHGHSHSHSHDHVHDEKCGHKH. The span at 178-192 shows a compositional bias: basic and acidic residues; it reads HSHDHVHDEKCGHKH.

This sequence belongs to the UreE family.

It localises to the cytoplasm. In terms of biological role, involved in urease metallocenter assembly. Binds nickel. Probably functions as a nickel donor during metallocenter assembly. In Cupriavidus necator (strain ATCC 17699 / DSM 428 / KCTC 22496 / NCIMB 10442 / H16 / Stanier 337) (Ralstonia eutropha), this protein is Urease accessory protein UreE.